Consider the following 215-residue polypeptide: Histone H1.1 (215 aa).

The tract at residues 1–43 (MSETVPPAPAASAAPEKPLAGKKAKKPAKAAAASKKKPAGPSV) is disordered. Serine 2 is modified (N-acetylserine). 2 positions are modified to phosphoserine: serine 2 and serine 12. At lysine 17 the chain carries N6-acetyllysine. Basic residues predominate over residues 20–38 (AGKKAKKPAKAAAASKKKP). Lysine 37 carries the N6-(beta-hydroxybutyryl)lysine modification. The 74-residue stretch at 39-112 (AGPSVSELIV…GASGSFKLNK (74 aa)) folds into the H15 domain. Serine 44 carries the post-translational modification Phosphoserine. At lysine 55 the chain carries N6-(beta-hydroxybutyryl)lysine. Arginine 57 is modified (citrulline). Lysine 67 is modified (N6-(beta-hydroxybutyryl)lysine). Lysine 78 carries the N6-acetyllysine modification. Residue lysine 88 is modified to N6-(beta-hydroxybutyryl)lysine. Position 93 is an N6-(beta-hydroxybutyryl)lysine; alternate (lysine 93). At lysine 93 the chain carries N6-acetyllysine; alternate. Residues 94-215 (GTLVQTKGTG…KPKKAAPKKK (122 aa)) are disordered. A Phosphoserine modification is found at serine 107. N6-(beta-hydroxybutyryl)lysine is present on lysine 109. Residues 122 to 147 (GASKVATKTKATGASKKLKKATGASK) are compositionally biased toward low complexity. An N6-acetyllysine modification is found at lysine 125. 2 stretches are compositionally biased toward basic residues: residues 148-181 (KSVKTPKKAKKPAATRKSSKNPKKPKTVKPKKVA) and 188-215 (KAVKPKAAKARVTKPKTAKPKKAAPKKK). Position 204 is a phosphothreonine (threonine 204).

Belongs to the histone H1/H5 family. Interacts with DFFB. Post-translationally, H1 histones are progressively phosphorylated during the cell cycle, becoming maximally phosphorylated during late G2 phase and M phase, and being dephosphorylated sharply thereafter. Citrullination at Arg-57 (H1R54ci) by PADI4 takes place within the DNA-binding site of H1 and results in its displacement from chromatin and global chromatin decondensation, thereby promoting pluripotency and stem cell maintenance.

Its subcellular location is the nucleus. It is found in the chromosome. Histone H1 protein binds to linker DNA between nucleosomes forming the macromolecular structure known as the chromatin fiber. Histones H1 are necessary for the condensation of nucleosome chains into higher-order structured fibers. Also acts as a regulator of individual gene transcription through chromatin remodeling, nucleosome spacing and DNA methylation. This is Histone H1.1 from Homo sapiens (Human).